We begin with the raw amino-acid sequence, 306 residues long: MIIFSGGTGTPKLLDGLRHIVPEDELTVVVNTAEDVWVSGNLITPDIDTILYLLSGRIDRDKWWGVKDDTFQTHREMKELGHDESMMIGDLDRVTHIMRSDLLRQGLSLSESIHELLSVYGIGVNVLPMSDDSVRTIVETPSGHVHFQDFWVKQHGVPEVLSVEQEGIEEASICSLVLEALESDDEVLIGPSNPITSIGPIISLPGMSRILRKKKVVAVSPIIGNEAVSGPAGKFMTARGFDVSSRGIADCYREFLDVLVLDDRDTTSPEQFQKMGVDVVSTNTLMKSLEISKDLSKKIVSIFANI.

Residue Asp48 participates in 7,8-didemethyl-8-hydroxy-5-deazariboflavin binding.

Belongs to the CofD family. As to quaternary structure, homodimer. The cofactor is Mg(2+).

It catalyses the reaction (2S)-lactyl-2-diphospho-5'-guanosine + 7,8-didemethyl-8-hydroxy-5-deazariboflavin = oxidized coenzyme F420-0 + GMP + H(+). It functions in the pathway cofactor biosynthesis; coenzyme F420 biosynthesis. In terms of biological role, catalyzes the transfer of the 2-phospholactate moiety from (2S)-lactyl-2-diphospho-5'-guanosine to 7,8-didemethyl-8-hydroxy-5-deazariboflavin (FO) with the formation of oxidized coenzyme F420-0 and GMP. In Methanococcoides burtonii (strain DSM 6242 / NBRC 107633 / OCM 468 / ACE-M), this protein is 2-phospho-L-lactate transferase.